The following is a 174-amino-acid chain: Sarcoplasmic calcium-binding protein (174 aa).

S1 is subject to N-acetylserine. EF-hand domains lie at 3–38 (LWVQ…FAKE), 55–90 (GVWD…NAKA), 91–126 (VVEG…LGLN), and 125–160 (LNPD…FFIN). Residues D16, D18, D20, and D27 each contribute to the Ca(2+) site. The Ca(2+) site is built by D104, N106, D108, M110, E115, D138, N140, D142, and E149.

Like parvalbumins, SCPs seem to be more abundant in fast contracting muscles, but no functional relationship can be established from this distribution. The polypeptide is Sarcoplasmic calcium-binding protein (Perinereis vancaurica tetradentata (Sandworm)).